A 354-amino-acid chain; its full sequence is Alkanal monooxygenase alpha chain (354 aa).

Belongs to the bacterial luciferase oxidoreductase family. In terms of assembly, heterodimer of an alpha and a beta chain.

The catalysed reaction is a long-chain fatty aldehyde + FMNH2 + O2 = a long-chain fatty acid + hnu + FMN + H2O + 2 H(+). Its function is as follows. Light-emitting reaction in luminous bacteria. The chain is Alkanal monooxygenase alpha chain (luxA) from Photobacterium leiognathi.